A 383-amino-acid chain; its full sequence is Succinyl-diaminopimelate desuccinylase (383 aa).

Position 74 (His-74) interacts with Zn(2+). Residue Asp-76 is part of the active site. Asp-107 is a Zn(2+) binding site. Glu-141 functions as the Proton acceptor in the catalytic mechanism. Zn(2+) contacts are provided by Glu-142, Glu-170, and His-356.

The protein belongs to the peptidase M20A family. DapE subfamily. Homodimer. Zn(2+) serves as cofactor. It depends on Co(2+) as a cofactor.

The enzyme catalyses N-succinyl-(2S,6S)-2,6-diaminopimelate + H2O = (2S,6S)-2,6-diaminopimelate + succinate. The protein operates within amino-acid biosynthesis; L-lysine biosynthesis via DAP pathway; LL-2,6-diaminopimelate from (S)-tetrahydrodipicolinate (succinylase route): step 3/3. In terms of biological role, catalyzes the hydrolysis of N-succinyl-L,L-diaminopimelic acid (SDAP), forming succinate and LL-2,6-diaminopimelate (DAP), an intermediate involved in the bacterial biosynthesis of lysine and meso-diaminopimelic acid, an essential component of bacterial cell walls. The polypeptide is Succinyl-diaminopimelate desuccinylase (Cupriavidus pinatubonensis (strain JMP 134 / LMG 1197) (Cupriavidus necator (strain JMP 134))).